The primary structure comprises 383 residues: tRNA-specific 2-thiouridylase MnmA (383 aa).

Residues 29–36 and methionine 55 each bind ATP; that span reads GMSGGVDS. Residues 115-117 are interaction with target base in tRNA; the sequence is NPD. Catalysis depends on cysteine 120, which acts as the Nucleophile. An intrachain disulfide couples cysteine 120 to cysteine 217. ATP is bound at residue glycine 145. The tract at residues 167-169 is interaction with tRNA; the sequence is KDQ. Catalysis depends on cysteine 217, which acts as the Cysteine persulfide intermediate. Residues 329 to 330 form an interaction with tRNA region; the sequence is RY.

This sequence belongs to the MnmA/TRMU family.

The protein resides in the cytoplasm. It carries out the reaction S-sulfanyl-L-cysteinyl-[protein] + uridine(34) in tRNA + AH2 + ATP = 2-thiouridine(34) in tRNA + L-cysteinyl-[protein] + A + AMP + diphosphate + H(+). Functionally, catalyzes the 2-thiolation of uridine at the wobble position (U34) of tRNA, leading to the formation of s(2)U34. The polypeptide is tRNA-specific 2-thiouridylase MnmA (Pasteurella multocida (strain Pm70)).